We begin with the raw amino-acid sequence, 87 residues long: Beta-mammal toxin Css4 (87 aa).

Residues 1–19 form the signal peptide; it reads MNSLLMITACLALVGTVWA. Positions 20-85 constitute an LCN-type CS-alpha/beta domain; sequence KEGYLVNSYT…VWPLPNKTCN (66 aa). 4 disulfides stabilise this stretch: Cys31–Cys84, Cys35–Cys60, Cys44–Cys65, and Cys48–Cys67. Residue Asn85 is modified to Asparagine amide.

The protein belongs to the long (4 C-C) scorpion toxin superfamily. Sodium channel inhibitor family. Beta subfamily. Expressed by the venom gland.

The protein resides in the secreted. Beta toxins bind voltage-independently at site-4 of sodium channels (Nav) and shift the voltage of activation toward more negative potentials thereby affecting sodium channel activation and promoting spontaneous and repetitive firing. This toxin is active only on mammals. The polypeptide is Beta-mammal toxin Css4 (Centruroides suffusus (Durango bark scorpion)).